A 209-amino-acid polypeptide reads, in one-letter code: Putative AgrB-like protein (209 aa).

5 consecutive transmembrane segments (helical) span residues 49-71, 82-102, 105-125, 149-169, and 173-193; these read ILFLVSYYFGLIKETIIMLAAFG, AKNSIVCTVMSLLMFVLGAYL, YLLFNNYMVLASFIIVNLLLF, QAVLMGMLLMAITLIIPDELI, and ISLSSYFEIISILPITYKVLG.

The protein belongs to the AgrB family.

Its subcellular location is the cell membrane. Its function is as follows. May be involved in the proteolytic processing of a quorum sensing system signal molecule precursor. The chain is Putative AgrB-like protein from Clostridium acetobutylicum (strain ATCC 824 / DSM 792 / JCM 1419 / IAM 19013 / LMG 5710 / NBRC 13948 / NRRL B-527 / VKM B-1787 / 2291 / W).